The following is a 921-amino-acid chain: Sodium/calcium exchanger 2 (921 aa).

Residues 1-20 form the signal peptide; that stretch reads MAPLALVGVTLLLAAPPCSG. Topologically, residues 21 to 68 are extracellular; that stretch reads AATPTPSLPPPPANDSDTSTGGCQGSYRCQPGVLLPVWEPDDPSLGDK. The tract at residues 22–42 is disordered; that stretch reads ATPTPSLPPPPANDSDTSTGG. The N-linked (GlcNAc...) asparagine glycan is linked to asparagine 34. A helical transmembrane segment spans residues 69-90; it reads AARAVVYFVAMVYMFLGVSIIA. Residues 91–130 are Cytoplasmic-facing; sequence DRFMAAIEVITSKEKEITITKANGETSVGTVRIWNETVSN. The helical transmembrane segment at 131–152 threads the bilayer; sequence LTLMALGSSAPEILLSVIEVCG. The Alpha-1 repeat unit spans residues 135–175; it reads ALGSSAPEILLSVIEVCGHNFQAGELGPGTIVGSAAFNMFV. Topologically, residues 153–164 are extracellular; the sequence is HNFQAGELGPGT. The helical transmembrane segment at 165 to 185 threads the bilayer; it reads IVGSAAFNMFVVIAVCIYVIP. Residues 186–196 are Cytoplasmic-facing; sequence AGESRKIKHLR. Residues 197-219 form a helical membrane-spanning segment; it reads VFFVTASWSIFAYVWLYLILAVF. Topologically, residues 220–222 are extracellular; it reads SPG. The chain crosses the membrane as a helical span at residues 223–246; sequence VVQVWEALLTLVFFPVCVVFAWMA. The Cytoplasmic portion of the chain corresponds to 247–720; it reads DKRLLFYKYV…DGSREERLPS (474 aa). The interval 248–267 is putative calmodulin-binding region; sequence KRLLFYKYVYKRYRTDPRSG. Calx-beta domains lie at 384 to 483 and 512 to 612; these read GAGE…VRLL and ATVT…IELG. Ca(2+)-binding residues include glutamate 407, aspartate 443, aspartate 468, aspartate 469, isoleucine 471, glutamate 473, glutamate 476, aspartate 518, aspartate 519, aspartate 520, glutamate 536, aspartate 598, glutamate 599, and glutamate 600. Serine 622 carries the post-translational modification Phosphoserine. Glutamate 665 provides a ligand contact to Ca(2+). The helical transmembrane segment at 721–740 threads the bilayer; it reads CFDYVMHFLTVFWKVLFACV. The Extracellular portion of the chain corresponds to 741–747; sequence PPTEYCH. The helical transmembrane segment at 748 to 770 threads the bilayer; sequence GWACFGVSILVIGLLTALIGDLA. Residues 771–772 are Cytoplasmic-facing; it reads SH. Residues 773 to 791 form a helical membrane-spanning segment; it reads FGCTVGLKDSVNAVVFVAL. The Alpha-2 repeat unit spans residues 790-826; the sequence is ALGTSIPDTFASKVAALQDQCADASIGNVTGSNAVNV. Residues 792–822 are Extracellular-facing; it reads GTSIPDTFASKVAALQDQCADASIGNVTGSN. Asparagine 817 carries an N-linked (GlcNAc...) asparagine glycan. The chain crosses the membrane as a helical span at residues 823 to 843; the sequence is AVNVFLGLGVAWSVAAVYWAV. The Cytoplasmic segment spans residues 844 to 854; the sequence is QGRPFEVRTGT. Residues 855-875 traverse the membrane as a helical segment; sequence LAFSVTLFTVFAFVGIAVLLY. Residues 876-892 are Extracellular-facing; sequence RRRPHIGGELGGPRGPK. Residues 893-909 traverse the membrane as a helical segment; the sequence is LATTALFLGLWLLYILF. The Cytoplasmic segment spans residues 910–921; the sequence is ASLEAYCHIRGF.

Belongs to the Ca(2+):cation antiporter (CaCA) (TC 2.A.19) family. SLC8 subfamily.

The protein localises to the cell membrane. It is found in the basolateral cell membrane. Its subcellular location is the perikaryon. The protein resides in the cell projection. It localises to the dendrite. The protein localises to the dendritic spine. The enzyme catalyses Ca(2+)(in) + 3 Na(+)(out) = Ca(2+)(out) + 3 Na(+)(in). Its activity is regulated as follows. Calcium transport is down-regulated by Na(+) and stimulated by Ca(2+). Functionally, mediates the electrogenic exchange of Ca(2+) against Na(+) ions across the cell membrane, and thereby contributes to the regulation of cytoplasmic Ca(2+) levels and Ca(2+)-dependent cellular processes. Contributes to cellular Ca(2+) homeostasis in excitable cells. Contributes to the rapid decrease of cytoplasmic Ca(2+) levels back to baseline after neuronal activation, and thereby contributes to modulate synaptic plasticity, learning and memory. Plays a role in regulating urinary Ca(2+) and Na(+) excretion. The chain is Sodium/calcium exchanger 2 (SLC8A2) from Homo sapiens (Human).